Consider the following 524-residue polypeptide: Phosphoenolpyruvate carboxykinase (ATP) (524 aa).

Positions 52, 188, and 194 each coordinate substrate. ATP contacts are provided by residues K194, H213, and 229–237 (GLSGTGKTT). Residues K194 and H213 each contribute to the Mn(2+) site. D250 contacts Mn(2+). ATP is bound by residues E278, R314, and T439. R314 is a binding site for substrate.

Belongs to the phosphoenolpyruvate carboxykinase (ATP) family. Mn(2+) serves as cofactor.

It is found in the cytoplasm. It carries out the reaction oxaloacetate + ATP = phosphoenolpyruvate + ADP + CO2. It functions in the pathway carbohydrate biosynthesis; gluconeogenesis. Functionally, involved in the gluconeogenesis. Catalyzes the conversion of oxaloacetate (OAA) to phosphoenolpyruvate (PEP) through direct phosphoryl transfer between the nucleoside triphosphate and OAA. This Campylobacter jejuni subsp. jejuni serotype O:2 (strain ATCC 700819 / NCTC 11168) protein is Phosphoenolpyruvate carboxykinase (ATP).